Consider the following 141-residue polypeptide: Putative pre-16S rRNA nuclease (141 aa).

This sequence belongs to the YqgF nuclease family.

The protein localises to the cytoplasm. In terms of biological role, could be a nuclease involved in processing of the 5'-end of pre-16S rRNA. The protein is Putative pre-16S rRNA nuclease of Desulforudis audaxviator (strain MP104C).